A 306-amino-acid chain; its full sequence is Ornithine carbamoyltransferase (306 aa).

Residues 46–49 (STRT), Gln73, Arg97, and 124–127 (HPTQ) each bind carbamoyl phosphate. Residues Asn156, Asp220, and 224–225 (SM) contribute to the L-ornithine site. Carbamoyl phosphate is bound by residues 260-261 (CL) and Arg288.

It belongs to the aspartate/ornithine carbamoyltransferase superfamily. OTCase family.

Its subcellular location is the cytoplasm. It carries out the reaction carbamoyl phosphate + L-ornithine = L-citrulline + phosphate + H(+). It functions in the pathway amino-acid biosynthesis; L-arginine biosynthesis; L-arginine from L-ornithine and carbamoyl phosphate: step 1/3. Functionally, reversibly catalyzes the transfer of the carbamoyl group from carbamoyl phosphate (CP) to the N(epsilon) atom of ornithine (ORN) to produce L-citrulline. This Campylobacter jejuni (strain RM1221) protein is Ornithine carbamoyltransferase.